Here is a 125-residue protein sequence, read N- to C-terminus: UPF0102 protein CCNA_00142 (125 aa).

This sequence belongs to the UPF0102 family.

This chain is UPF0102 protein CCNA_00142, found in Caulobacter vibrioides (strain NA1000 / CB15N) (Caulobacter crescentus).